A 311-amino-acid polypeptide reads, in one-letter code: Formimidoylglutamase (311 aa).

6 residues coordinate Mn(2+): His-130, Asp-155, His-157, Asp-159, Cys-242, and Asp-244.

The protein belongs to the arginase family. Requires Mn(2+) as cofactor.

It carries out the reaction N-formimidoyl-L-glutamate + H2O = formamide + L-glutamate. It participates in amino-acid degradation; L-histidine degradation into L-glutamate; L-glutamate from N-formimidoyl-L-glutamate (hydrolase route): step 1/1. In terms of biological role, catalyzes the conversion of N-formimidoyl-L-glutamate to L-glutamate and formamide. In Staphylococcus aureus (strain MSSA476), this protein is Formimidoylglutamase.